The primary structure comprises 1513 residues: Mucin-2 (1513 aa).

The signal sequence occupies residues M1–G20. The 173-residue stretch at H32–E204 folds into the VWFD 1 domain. Cystine bridges form between C34/C166, C56/C203, C64/C163, C215/C252, C222/C247, C234/C272, C254/C260, C262/C288, C292/C326, C309/C348, C328/C342, C350/C372, C367/C384, C370/C379, C388/C525, C410/C560, C432/C440, C571/C616, C585/C611, C598/C636, C618/C624, C626/C651, C658/C695, C671/C685, C675/C715, C697/C709, C717/C739, and C737/C746. D46 is a Ca(2+) binding site. M143 and M151 together coordinate Cu(+). E153 contributes to the Cu(2+) binding site. N160 is a glycosylation site (N-linked (GlcNAc...) asparagine). Residues D168, N170, and E177 each contribute to the Ca(2+) site. Cu(2+) is bound by residues H274 and H321. The region spanning C292–C348 is the TIL domain. Cu(+) is bound at residue M323. Residues C350–C410 form the VWFC domain. The 176-residue stretch at E386–H561 folds into the VWFD 2 domain. D400 lines the Ca(2+) pocket. An N-linked (GlcNAc...) asparagine glycan is attached at N420. Residues N527, N529, L531, D534, and D535 each contribute to the Ca(2+) site. Residue N667 is glycosylated (N-linked (GlcNAc...) asparagine). N767 is a glycosylation site (N-linked (GlcNAc...) asparagine). 21 disulfides stabilise this stretch: C781/C817, C799/C811, C819/C842, C836/C854, C840/C849, C858/C989, C880/C1024, C889/C986, C906/C913, C1034/C1077, C1048/C1072, C1059/C1099, C1079/C1087, C1089/C1114, C1105/C1134, C1118/C1160, C1142/C1184, C1164/C1178, C1186/C1210, C1205/C1235, and C1208/C1218. N-linked (GlcNAc...) asparagine glycosylation occurs at N837. Residues S856–P1025 form the VWFD 3 domain. Residue D870 participates in Ca(2+) binding. The N-linked (GlcNAc...) asparagine glycan is linked to N892. 4 residues coordinate Ca(2+): N991, D993, N998, and D999. Residues N1136 and N1151 are each glycosylated (N-linked (GlcNAc...) asparagine). N-linked (GlcNAc...) asparagine glycans are attached at residues N1212, N1227, and N1243. T1264, T1267, T1268, and T1280 each carry an O-linked (GalNAc) threonine glycan. S1286 is a glycosylation site (O-linked (GalNAc) serine). T1290 carries an O-linked (GalNAc) threonine glycan. Residues N1303, H1306, S1309, G1313, D1314, and E1316 each coordinate Ca(2+). N1350 carries an N-linked (GlcNAc...) asparagine glycan. Positions 1373 and 1374 each coordinate Ca(2+). A run of 11 repeats spans residues S1392–S1407, S1408–T1423, S1424–V1434, S1435–T1445, S1446–T1456, S1457–P1467, S1468–P1478, S1479–P1489, S1490–T1500, S1501–T1511, and S1512–P1513. Residues S1392–P1513 are approximate repeats. The interval S1392–P1513 is disordered.

As to quaternary structure, homomultimer; disulfide-linked. The N- and C-terminus mediate their assembly into higher order structures to form filaments. The CTCK domains of two polypeptides associate in the endoplasmic reticulum to generate intermolecularly disulfide-bonded dimers. These dimers progress to the Golgi apparatus, which is a more acidic environment than the endoplasmic reticulum. Under acidic conditions, the N-termini form non-covalent intermolecular interactions that juxtapose assemblies of the third VWD domain (VWD3) from different CTCK-linked dimers. The VWD3 assemblies then become disulfide bonded to one another to produce long, disulfide-linked polymers that remain highly compact until secretion. Interacts with FCGBP. Interacts with AGR2; disulfide-linked. Post-translationally, O-glycosylated. O-glycosylation is required for mucin assembly. Goblet cells synthesize two forms of mucin that differ in branched chain O-glycosylation and the site of production in the colon. In terms of processing, may undergo proteolytic cleavage in the outer mucus layer of the colon, contributing to the expanded volume and loose nature of this layer which allows for bacterial colonization in contrast to the inner mucus layer which is dense and devoid of bacteria. At low pH of 6 and under, undergoes autocatalytic cleavage in vitro in the N-terminal region of the fourth VWD domain. It is likely that this also occurs in vivo and is triggered by the low pH of the late secretory pathway. In terms of tissue distribution, expressed in intestine and airway.

The protein localises to the secreted. Functionally, coats the epithelia of the intestines and other mucus membrane-containing organs to provide a protective, lubricating barrier against particles and infectious agents at mucosal surfaces. Major constituent of the colon mucus, which is mainly formed by large polymeric networks of MUC2 secreted by goblet cells that cover the exposed surfaces of intestine. MUC2 networks form hydrogels that guard the underlying epithelium from pathogens and other hazardous matter entering from the outside world, while permitting nutrient absorption and gas exchange. Acts as a divalent copper chaperone that protects intestinal cells from copper toxicity and facilitates nutritional copper unptake into cells. Binds both Cu(2+) and its reduced form, Cu(1+), at two juxtaposed binding sites: Cu(2+), once reduced to Cu(1+) by vitamin C (ascorbate) or other dietary antioxidants, transits to the other binding site. MUC2-bound Cu(1+) is protected from oxidation in aerobic environments, and can be released for nutritional delivery to cells. Mucin gels store antimicrobial molecules that participate in innate immunity. Mucin glycoproteins also house and feed the microbiome, lubricate tissue surfaces, and may facilitate the removal of contaminants and waste products from the body. Goblet cells synthesize two forms of MUC2 mucin that differ in branched chain O-glycosylation and the site of production in the colon: a (1) 'thick' mucus that wraps the microbiota to form fecal pellets is produced in the proximal, ascending colon. 'Thick' mucus transits along the descending colon and is lubricated by a (2) 'thin' MUC2 mucus produced in the distal colon which adheres to the 'thick' mucus. This is Mucin-2 from Rattus norvegicus (Rat).